The sequence spans 187 residues: Ribosome-recycling factor (187 aa).

This sequence belongs to the RRF family.

The protein localises to the cytoplasm. Responsible for the release of ribosomes from messenger RNA at the termination of protein biosynthesis. May increase the efficiency of translation by recycling ribosomes from one round of translation to another. The sequence is that of Ribosome-recycling factor from Paracoccus zeaxanthinifaciens.